The following is a 378-amino-acid chain: Probable S-(hydroxymethyl)glutathione dehydrogenase 1 (378 aa).

C47 is a binding site for Zn(2+). H48 lines the NAD(+) pocket. Zn(2+)-binding residues include H69, E70, C99, C102, C105, C113, and C176. NAD(+) is bound by residues 201–206, D225, 293–295, and 318–320; these read GCGCVG, IGV, and SAF.

It belongs to the zinc-containing alcohol dehydrogenase family. Class-III subfamily. The cofactor is Zn(2+).

The enzyme catalyses a primary alcohol + NAD(+) = an aldehyde + NADH + H(+). It carries out the reaction a secondary alcohol + NAD(+) = a ketone + NADH + H(+). The catalysed reaction is S-(hydroxymethyl)glutathione + NADP(+) = S-formylglutathione + NADPH + H(+). It catalyses the reaction S-(hydroxymethyl)glutathione + NAD(+) = S-formylglutathione + NADH + H(+). The enzyme catalyses S-nitrosoglutathione + NADH + H(+) = S-(hydroxysulfenamide)glutathione + NAD(+). In terms of biological role, oxidizes long-chain alcohols and, in the presence of glutathione, is able to oxidize formaldehyde. Also acts as a S-nitroso-glutathione reductase by catalyzing the NADH-dependent reduction of S-nitrosoglutathione, thereby regulating protein S-nitrosylation. The sequence is that of Probable S-(hydroxymethyl)glutathione dehydrogenase 1 from Schizosaccharomyces pombe (strain 972 / ATCC 24843) (Fission yeast).